Reading from the N-terminus, the 443-residue chain is Protein king tubby (443 aa).

Disordered stretches follow at residues 57–80 (TNGS…NNMR) and 98–191 (HELE…EGDV). Residues 68–80 (AMNTSRNHSNNMR) show a composition bias toward polar residues. Low complexity predominate over residues 113–128 (QHQQSASHSANSTQSQ). Serine 136 carries the phosphoserine modification. Residues 177–186 (NGTGNGTGGE) show a composition bias toward gly residues.

The protein belongs to the TUB family.

It localises to the cytoplasm. The protein resides in the nucleus. Its subcellular location is the cell projection. It is found in the cilium membrane. The protein localises to the rhabdomere. In Drosophila simulans (Fruit fly), this protein is Protein king tubby.